The chain runs to 206 residues: Probable glutathione peroxidase 3, mitochondrial (206 aa).

The transit peptide at 1–12 directs the protein to the mitochondrion; that stretch reads MPRSSRWVNQRA. Residue Cys-80 is part of the active site.

The protein belongs to the glutathione peroxidase family. Interacts with ABI1 and ABI2. In terms of tissue distribution, ubiquitous.

The protein resides in the mitochondrion. It catalyses the reaction 2 glutathione + H2O2 = glutathione disulfide + 2 H2O. The redox states are modulated by H(2)O(2). Functionally, may constitute a glutathione peroxidase-like protective system against oxidative stresses. Involved positively in abscisic acid (ABA) signaling pathway that regulates numerous ABA responses, such as stomatal closure, seed germination and inhibition of vegetative growth. Oxidizes and represses target proteins (e.g. the phosphatase activity of ABI1 and ABI2) when oxidized by H(2)O(2), probably after ABA signaling. Modulates the calcium channel activity in guard cells in response to ABA or H(2)O(2). Confers tolerance to drought stress, by enhancing the ABA-dependent stomatal closure. The sequence is that of Probable glutathione peroxidase 3, mitochondrial (GPX3) from Arabidopsis thaliana (Mouse-ear cress).